An 87-amino-acid chain; its full sequence is Toxin CsEv2 (87 aa).

Residues 1–19 form the signal peptide; that stretch reads MNSLLIITACLFLIGTVWA. Positions 20 to 85 constitute an LCN-type CS-alpha/beta domain; it reads KEGYLVNKST…TYPLPNKSCS (66 aa). Disulfide bonds link Cys-31–Cys-84, Cys-35–Cys-60, Cys-44–Cys-65, and Cys-48–Cys-67.

It belongs to the long (4 C-C) scorpion toxin superfamily. Sodium channel inhibitor family. Beta subfamily. As to expression, expressed by the venom gland.

The protein resides in the secreted. Beta toxins bind voltage-independently at site-4 of sodium channels (Nav) and shift the voltage of activation toward more negative potentials thereby affecting sodium channel activation and promoting spontaneous and repetitive firing. Induces immediate paralysis in crickets after injection, with a total paralysis occurring within 15-30 minutes and lasting for 1-2 hours. Is also lethal to vertebrate (chicks) when injected in very high dosages (more that 100 mg/kg). This Centruroides sculpturatus (Arizona bark scorpion) protein is Toxin CsEv2.